We begin with the raw amino-acid sequence, 90 residues long: Nodulation protein NolS (90 aa).

Involved in nodulation of a particular host, M.lupulina. This is Nodulation protein NolS (nolS) from Sinorhizobium meliloti (strain Sm2011 / Rm2011 / 2011).